The primary structure comprises 279 residues: Thymidylate synthase (279 aa).

Residue 133–134 participates in dUMP binding; sequence RR. The active-site Nucleophile is the cysteine 154. DUMP contacts are provided by residues 178 to 181, asparagine 189, and 219 to 221; these read RSND and HIY. Aspartate 181 serves as a coordination point for (6R)-5,10-methylene-5,6,7,8-tetrahydrofolate. Residue alanine 278 coordinates (6R)-5,10-methylene-5,6,7,8-tetrahydrofolate.

Belongs to the thymidylate synthase family. Bacterial-type ThyA subfamily. In terms of assembly, homodimer.

The protein resides in the cytoplasm. The enzyme catalyses dUMP + (6R)-5,10-methylene-5,6,7,8-tetrahydrofolate = 7,8-dihydrofolate + dTMP. The protein operates within pyrimidine metabolism; dTTP biosynthesis. Catalyzes the reductive methylation of 2'-deoxyuridine-5'-monophosphate (dUMP) to 2'-deoxythymidine-5'-monophosphate (dTMP) while utilizing 5,10-methylenetetrahydrofolate (mTHF) as the methyl donor and reductant in the reaction, yielding dihydrofolate (DHF) as a by-product. This enzymatic reaction provides an intracellular de novo source of dTMP, an essential precursor for DNA biosynthesis. The polypeptide is Thymidylate synthase (Streptococcus suis (strain 05ZYH33)).